The sequence spans 148 residues: Large ribosomal subunit protein uL13 (148 aa).

This sequence belongs to the universal ribosomal protein uL13 family. Part of the 50S ribosomal subunit.

Functionally, this protein is one of the early assembly proteins of the 50S ribosomal subunit, although it is not seen to bind rRNA by itself. It is important during the early stages of 50S assembly. This is Large ribosomal subunit protein uL13 from Oenococcus oeni (strain ATCC BAA-331 / PSU-1).